Reading from the N-terminus, the 82-residue chain is Large ribosomal subunit protein bL27 (82 aa).

The tract at residues 1-20 (MAHKKGASSSRNGRDSNPQY) is disordered. Residues 7 to 19 (ASSSRNGRDSNPQ) show a composition bias toward polar residues.

Belongs to the bacterial ribosomal protein bL27 family.

This chain is Large ribosomal subunit protein bL27, found in Bifidobacterium longum (strain NCC 2705).